A 1006-amino-acid polypeptide reads, in one-letter code: E3 ubiquitin-protein ligase MIB1 (1006 aa).

Positions Asn-6–Ala-74 constitute an MIB/HERC2 1 domain. The ZZ-type zinc finger occupies His-80–Ser-132. Residues Cys-85, Cys-88, Cys-100, Cys-103, Cys-109, Cys-112, His-118, and His-122 each contribute to the Zn(2+) site. The region spanning Ser-143–Ala-221 is the MIB/HERC2 2 domain. The residue at position 408 (Ser-408) is a Phosphoserine. ANK repeat units follow at residues Asp-430 to Gly-460, Ala-463 to Ala-492, Asp-496 to Ala-525, Arg-529 to Leu-558, Glu-562 to Ile-591, Asn-595 to Glu-627, Asp-631 to Ile-661, Asn-665 to Ile-694, and Asp-698 to Ala-729. RING-type zinc fingers lie at residues Cys-819–Lys-854 and Cys-866–Arg-901. Residues Gln-935–Met-962 adopt a coiled-coil conformation. Residues Cys-963–Arg-996 form an RING-type 3 zinc finger.

In terms of assembly, interacts with CEP131 and PCM1. Post-translationally, ubiquitinated; this modification is inhibited in response to cellular stress, such as ultraviolet light (UV) radiation or heat shock. Ubiquitinated; possibly via autoubiquitination. Detected in all tissues tested. Present in embryo, embryonic stem cells, bladder, skeletal muscle, bladder, uterus, testis, stomach, colon, ileum, trachea, lung, aorta, kidney, spleen, liver and vas deferens (at protein level). Highly expressed in testis.

It is found in the cytoplasm. It localises to the cytoskeleton. The protein localises to the microtubule organizing center. The protein resides in the centrosome. Its subcellular location is the centriolar satellite. It is found in the cell membrane. It catalyses the reaction S-ubiquitinyl-[E2 ubiquitin-conjugating enzyme]-L-cysteine + [acceptor protein]-L-lysine = [E2 ubiquitin-conjugating enzyme]-L-cysteine + N(6)-ubiquitinyl-[acceptor protein]-L-lysine.. It participates in protein modification; protein ubiquitination. Functionally, E3 ubiquitin-protein ligase that mediates ubiquitination of Delta receptors, which act as ligands of Notch proteins. Positively regulates the Delta-mediated Notch signaling by ubiquitinating the intracellular domain of Delta, leading to endocytosis of Delta receptors. Involved in ubiquitination of centriolar satellite CEP131, CEP290 and PCM1 proteins and hence inhibits primary cilium formation in proliferating cells. Mediates 'Lys-63'-linked polyubiquitination of TBK1, which probably participates in kinase activation. Probably mediates ubiquitination and subsequent proteasomal degradation of DAPK1, thereby antagonizing anti-apoptotic effects of DAPK1 to promote TNF-induced apoptosis. The polypeptide is E3 ubiquitin-protein ligase MIB1 (Mib1) (Mus musculus (Mouse)).